A 462-amino-acid chain; its full sequence is FAD-dependent monooxygenase opaC (462 aa).

The N-linked (GlcNAc...) asparagine glycan is linked to Asn-10. A helical transmembrane segment spans residues 14–34 (ITVIIIGLGIGGLTAAISCHL). Asp-43 contributes to the FAD binding site. Asn-60 is a glycosylation site (N-linked (GlcNAc...) asparagine). Position 115 (Arg-115) interacts with FAD. Arg-193 is a catalytic residue. The FAD site is built by Asp-322 and Ala-335.

The protein belongs to the paxM FAD-dependent monooxygenase family. The cofactor is FAD.

The protein resides in the membrane. The protein operates within secondary metabolite biosynthesis. Functionally, FAD-dependent monooxygenase; part of the gene cluster that mediates the biosynthesis of oxepinamides, derivatives of anthranilyl-containing tripeptides that share an oxepin ring and a fused pyrimidinone moiety. The nonribosomal peptide synthetase (NRPS) opaA assembles the quinazolinone core with D-Phe incorporation. The first adenylation domain (A1) of opaA loads and activates anthranilic acid whereas the second A domain (A2) is for activating of L-Phe, which is then converted to D-form by the E domain. The third A domain (A3) is responsible for L-Ile activation and the terminal condensation domain C3 for cyclization and releasing the NRPS product protuboxepin K. The cytochrome P450 monooxygenase opaB then catalyzes alone the oxepin ring formation to convert protuboxepin K into protuboxepin A. The flavoenzyme opaC installs subsequently one hydroxyl group at the oxepin ring, accompanied by double bond migration, to form 15-epi-oxepinamide E. The epimerase opaE changes the D-Phe residue back to L-form, leading to oxepinamide E, which is further methylated at the hydroxyl group at C-12 by the O-methyltransferase OpaF to yield oxepinamide F. This chain is FAD-dependent monooxygenase opaC, found in Aspergillus ustus.